The chain runs to 285 residues: Bifunctional protein FolD (285 aa).

NADP(+) contacts are provided by residues 166-168 (GRS), serine 191, and threonine 232.

This sequence belongs to the tetrahydrofolate dehydrogenase/cyclohydrolase family. In terms of assembly, homodimer.

The enzyme catalyses (6R)-5,10-methylene-5,6,7,8-tetrahydrofolate + NADP(+) = (6R)-5,10-methenyltetrahydrofolate + NADPH. It catalyses the reaction (6R)-5,10-methenyltetrahydrofolate + H2O = (6R)-10-formyltetrahydrofolate + H(+). Its pathway is one-carbon metabolism; tetrahydrofolate interconversion. Its function is as follows. Catalyzes the oxidation of 5,10-methylenetetrahydrofolate to 5,10-methenyltetrahydrofolate and then the hydrolysis of 5,10-methenyltetrahydrofolate to 10-formyltetrahydrofolate. The chain is Bifunctional protein FolD from Chloroflexus aggregans (strain MD-66 / DSM 9485).